The following is a 407-amino-acid chain: Na(+)-translocating NADH-quinone reductase subunit F (407 aa).

Residues 3–23 traverse the membrane as a helical segment; that stretch reads IILGVVMFTLIVLALVLVILF. The region spanning 32-126 is the 2Fe-2S ferredoxin-type domain; it reads GDITISVNGD…DMDIELPEEI (95 aa). [2Fe-2S] cluster contacts are provided by cysteine 69, cysteine 75, cysteine 78, and cysteine 110. The FAD-binding FR-type domain maps to 129 to 269; that stretch reads VKKWECTVIS…SGPFGEFFAK (141 aa). The catalytic stretch occupies residues 272–389; it reads DAEMVFIGGG…PMMNAAVIGM (118 aa).

It belongs to the NqrF family. As to quaternary structure, composed of six subunits; NqrA, NqrB, NqrC, NqrD, NqrE and NqrF. [2Fe-2S] cluster serves as cofactor. FAD is required as a cofactor.

It is found in the cell inner membrane. It carries out the reaction a ubiquinone + n Na(+)(in) + NADH + H(+) = a ubiquinol + n Na(+)(out) + NAD(+). Its function is as follows. NQR complex catalyzes the reduction of ubiquinone-1 to ubiquinol by two successive reactions, coupled with the transport of Na(+) ions from the cytoplasm to the periplasm. The first step is catalyzed by NqrF, which accepts electrons from NADH and reduces ubiquinone-1 to ubisemiquinone by a one-electron transfer pathway. In Vibrio parahaemolyticus serotype O3:K6 (strain RIMD 2210633), this protein is Na(+)-translocating NADH-quinone reductase subunit F.